A 602-amino-acid chain; its full sequence is Protein SHORT-ROOT 1 (602 aa).

Over residues 12-55 (AASEQQQQQQQSASYNSRSTTSSGSRSSSHQTNASYSYYHHSSN) the composition is skewed to low complexity. Disordered stretches follow at residues 12–69 (AASE…YYYG), 101–145 (DFSS…TAAG), and 165–185 (DFSSPASSSGGGTASSGAVGG). A compositionally biased stretch (gly residues) spans 56–68 (SGGGGGGGGGYYY). Residues 122 to 145 (PPASSTPTGTAPTPPLSTSSTAAG) show a composition bias toward low complexity. A compositionally biased stretch (gly residues) spans 173 to 185 (SGGGTASSGAVGG). Residues 183-601 (VGGGGGGRWA…QPLVWASAWR (419 aa)) form the GRAS domain. Positions 190 to 253 (RWASQLLLEC…LTASGPRTLR (64 aa)) are leucine repeat I (LRI). The tract at residues 272–349 (ALRFQELSPW…PHLSITTVVS (78 aa)) is VHIID. The short motif at 311-315 (FHILD) is the VHIID element. The segment at 365-401 (EIGQRMEKFARLMGVPFRFRAVHHSGDLAELDLDALD) is leucine repeat II (LRII). Residues 411 to 517 (LAVNCVNSLR…ERGAGRAIVD (107 aa)) are PFYRE. The interval 520-601 (SCPASESMER…QPLVWASAWR (82 aa)) is SAW.

It belongs to the GRAS family. In terms of assembly, interacts with SCR1. Interacts with SMOS1. As to expression, expressed in leaves and roots. Detected in the stele, the endodermis and part of the cortex.

The protein localises to the nucleus. In terms of biological role, transcription factor required for the asymmetric cell division involved in radial pattern formation in roots. Essential for both cell division and cell specification. The sequence is that of Protein SHORT-ROOT 1 from Oryza sativa subsp. japonica (Rice).